Here is a 503-residue protein sequence, read N- to C-terminus: Aspartyl/glutamyl-tRNA(Asn/Gln) amidotransferase subunit B (503 aa).

Belongs to the GatB/GatE family. GatB subfamily. As to quaternary structure, heterotrimer of A, B and C subunits.

It catalyses the reaction L-glutamyl-tRNA(Gln) + L-glutamine + ATP + H2O = L-glutaminyl-tRNA(Gln) + L-glutamate + ADP + phosphate + H(+). It carries out the reaction L-aspartyl-tRNA(Asn) + L-glutamine + ATP + H2O = L-asparaginyl-tRNA(Asn) + L-glutamate + ADP + phosphate + 2 H(+). Its function is as follows. Allows the formation of correctly charged Asn-tRNA(Asn) or Gln-tRNA(Gln) through the transamidation of misacylated Asp-tRNA(Asn) or Glu-tRNA(Gln) in organisms which lack either or both of asparaginyl-tRNA or glutaminyl-tRNA synthetases. The reaction takes place in the presence of glutamine and ATP through an activated phospho-Asp-tRNA(Asn) or phospho-Glu-tRNA(Gln). The polypeptide is Aspartyl/glutamyl-tRNA(Asn/Gln) amidotransferase subunit B (Ruegeria pomeroyi (strain ATCC 700808 / DSM 15171 / DSS-3) (Silicibacter pomeroyi)).